Reading from the N-terminus, the 434-residue chain is Histidinol dehydrogenase (434 aa).

Residues tyrosine 130, glutamine 188, and asparagine 211 each contribute to the NAD(+) site. Serine 237, glutamine 259, and histidine 262 together coordinate substrate. Glutamine 259 and histidine 262 together coordinate Zn(2+). Active-site proton acceptor residues include glutamate 326 and histidine 327. Substrate-binding residues include histidine 327, aspartate 360, glutamate 414, and histidine 419. Aspartate 360 contributes to the Zn(2+) binding site. A Zn(2+)-binding site is contributed by histidine 419.

The protein belongs to the histidinol dehydrogenase family. As to quaternary structure, homodimer. Zn(2+) serves as cofactor.

It catalyses the reaction L-histidinol + 2 NAD(+) + H2O = L-histidine + 2 NADH + 3 H(+). It functions in the pathway amino-acid biosynthesis; L-histidine biosynthesis; L-histidine from 5-phospho-alpha-D-ribose 1-diphosphate: step 9/9. In terms of biological role, catalyzes the sequential NAD-dependent oxidations of L-histidinol to L-histidinaldehyde and then to L-histidine. The chain is Histidinol dehydrogenase from Shigella dysenteriae serotype 1 (strain Sd197).